The following is a 1243-amino-acid chain: Serine/threonine-protein kinase WNK4 (1243 aa).

Positions 1 to 17 (MLASPATETTVLMSQTE) are enriched in polar residues. A disordered region spans residues 1 to 142 (MLASPATETT…GPGSREPLRV (142 aa)). Residues 65 to 77 (VDLGLLSSWSLPA) show a composition bias toward low complexity. Positions 78-103 (SPAPDPPDPPDSAGPGPARSPPPSSK) are enriched in pro residues. At Ser-97 the chain carries Phosphoserine. Residues 118–127 (AAEDSARPEL) show a composition bias toward basic and acidic residues. Glycyl lysine isopeptide (Lys-Gly) (interchain with G-Cter in ubiquitin) cross-links involve residues Lys-157 and Lys-175. One can recognise a Protein kinase domain in the interval 174–432 (LKFDIEIGRG…IQDLLAHAFF (259 aa)). Ser-184 lines the ATP pocket. Residues Lys-186, Lys-226, and Lys-241 each participate in a glycyl lysine isopeptide (Lys-Gly) (interchain with G-Cter in ubiquitin) cross-link. ATP is bound by residues 254-257 (TELM) and Lys-304. The active-site Proton acceptor is the Asp-321. Residue Lys-328 forms a Glycyl lysine isopeptide (Lys-Gly) (interchain with G-Cter in ubiquitin) linkage. Phosphoserine; by autocatalysis is present on residues Ser-331 and Ser-335. Residues Lys-387, Lys-393, Lys-450, and Lys-454 each participate in a glycyl lysine isopeptide (Lys-Gly) (interchain with G-Cter in ubiquitin) cross-link. A disordered region spans residues 526–564 (KARELEALPPEPGPPPATVPMAPGPPSVFPPEPEEPEAD). Residues 534 to 556 (PPEPGPPPATVPMAPGPPSVFPP) show a composition bias toward pro residues. The interval 557–567 (EPEEPEADQHQ) is interaction with KLHL3. The residue at position 575 (Ser-575) is a Phosphoserine. The span at 630 to 641 (SGPGSDFSPGDS) shows a compositional bias: low complexity. Disordered stretches follow at residues 630–683 (SGPG…SVSD), 751–871 (DTGP…STPE), and 943–1110 (SPSP…SPVW). Over residues 663 to 676 (PPGRNLRRRPRSRL) the composition is skewed to basic residues. Residues 767–780 (EPAPLPALPVPLPD) are compositionally biased toward pro residues. Positions 797-812 (WTAFSTSSSSPGTPLS) are enriched in low complexity. Pro residues predominate over residues 822-843 (PISPGPIFPITSPPCHPSPSPF). Composition is skewed to low complexity over residues 844-854 (SPISSQVSSNP), 862-871 (PLPFSSSTPE), and 943-952 (SPSPGLLSQS). Residues 953–970 (PPAPPSPLPSLPLPPPVA) show a composition bias toward pro residues. Lys-1010 is covalently cross-linked (Glycyl lysine isopeptide (Lys-Gly) (interchain with G-Cter in ubiquitin)). The short motif at 1016–1019 (RFQV) is the RFXV motif element. Position 1035 is a phosphoserine (Ser-1035). The span at 1065-1077 (ETREALAESDRAA) shows a compositional bias: basic and acidic residues. Residues Lys-1144, Lys-1157, and Lys-1158 each participate in a glycyl lysine isopeptide (Lys-Gly) (interchain with G-Cter in ubiquitin) cross-link. The interval 1166 to 1243 (RLGKQPPPGI…VTFAGDVGRM (78 aa)) is disordered. 2 stretches are compositionally biased toward polar residues: residues 1193 to 1204 (SFPTSRRNSLQR) and 1216 to 1228 (NSLS…SQEQ). Ser-1217 is subject to Phosphoserine.

It belongs to the protein kinase superfamily. Ser/Thr protein kinase family. WNK subfamily. As to quaternary structure, interacts with the C-terminal region of KCNJ1. It depends on Mg(2+) as a cofactor. Autophosphorylated at Ser-331 and Ser-335, promoting its activation. Phosphorylated by WNK1 and WNK3. Phosphorylated at Ser-575 in a MAP3K15/ASK3-dependent process in response to osmotic stress or hypotonic low-chloride stimulation. In terms of processing, ubiquitinated by the BCR(KLHL3) complex, leading to its degradation. Also ubiquitinated by the BCR(KLHL2) complex. As to expression, expressed in kidney, colon and skin.

It localises to the cell junction. It is found in the tight junction. The catalysed reaction is L-seryl-[protein] + ATP = O-phospho-L-seryl-[protein] + ADP + H(+). It carries out the reaction L-threonyl-[protein] + ATP = O-phospho-L-threonyl-[protein] + ADP + H(+). Its activity is regulated as follows. Activation requires autophosphorylation of Ser-331 and Ser-335. Autophosphorylation and subsequent activation is inhibited by increases in intracellular ionic strength: Cl(-) potently inhibits WNK4 kinase activity via direct binding. Also inhibited by K(+) ions. Its function is as follows. Serine/threonine-protein kinase component of the WNK4-SPAK/OSR1 kinase cascade, which acts as a key regulator of ion transport in the distal nephron and blood pressure. The WNK4-SPAK/OSR1 kinase cascade is composed of WNK4, which mediates phosphorylation and activation of downstream kinases OXSR1/OSR1 and STK39/SPAK. Following activation, OXSR1/OSR1 and STK39/SPAK catalyze phosphorylation of ion cotransporters, such as SLC12A1/NKCC2, SLC12A2/NKCC1, SLC12A3/NCC, SLC12A5/KCC2 or SLC12A6/KCC3, regulating their activity. Acts as a molecular switch that regulates the balance between renal salt reabsorption and K(+) secretion by modulating the activities of renal transporters and channels, including the Na-Cl cotransporter SLC12A3/NCC and the K(+) channel, KCNJ1/ROMK. Regulates NaCl reabsorption in the distal nephron by activating the thiazide-sensitive Na-Cl cotransporter SLC12A3/NCC in distal convoluted tubule cells of kidney: activates SLC12A3/NCC in a OXSR1/OSR1- and STK39/SPAK-dependent process. Also acts as a scaffold protein independently of its protein kinase activity: negatively regulates cell membrane localization of various transporters and channels (CFTR, KCNJ1/ROMK, SLC4A4, SLC26A9 and TRPV4) by clathrin-dependent endocytosis. Also inhibits the activity of the epithelial Na(+) channel (ENaC) SCNN1A, SCNN1B, SCNN1D in a inase-independent mechanism. May also phosphorylate NEDD4L. This is Serine/threonine-protein kinase WNK4 from Homo sapiens (Human).